The chain runs to 253 residues: Uracil-DNA glycosylase (253 aa).

The active-site Proton acceptor is the Asp-79.

It belongs to the uracil-DNA glycosylase (UDG) superfamily. UNG family.

The protein resides in the cytoplasm. It carries out the reaction Hydrolyzes single-stranded DNA or mismatched double-stranded DNA and polynucleotides, releasing free uracil.. Excises uracil residues from the DNA which can arise as a result of misincorporation of dUMP residues by DNA polymerase or due to deamination of cytosine. The protein is Uracil-DNA glycosylase of Xylella fastidiosa (strain M23).